Reading from the N-terminus, the 249-residue chain is MADS-box transcription factor 18 (249 aa).

In terms of domain architecture, MADS-box spans 1 to 61 (MGRGPVQLRR…GKLYEFSSHS (61 aa)). Residues 88–179 (QENWGDEYGI…KLMETEKEKN (92 aa)) form the K-box domain. The segment at 184-249 (NTNREEQNGA…PPWMLRTSHT (66 aa)) is disordered. A compositionally biased stretch (polar residues) spans 210-236 (PTTNNSQSQPRGSGESEAQPSPAQAGN).

Widely expressed. Transcripts accumulate to higher levels in organs that retain meristematic characteristics: in the apical meristem and in the meristematic leaf primordia formed on its flank; in the developing panicle at the early stage of rachis-branch primordia differentiation; in the procambium of the rachis branches and in all floral organ primordia.

The protein resides in the nucleus. Probable transcription factor. The protein is MADS-box transcription factor 18 (MADS18) of Oryza sativa subsp. indica (Rice).